Here is an 82-residue protein sequence, read N- to C-terminus: QSGKDATIVELTNDNDGLGQYNFAYRTSDGIARQEQGALKNAGSENEAIEVQGSYTYKGVDGKDYTVTFVANENGYQPRVQS.

Glutamine 1 bears the Pyrrolidone carboxylic acid mark. A Chitin-binding type R&amp;R domain is found at 18 to 82 (LGQYNFAYRT…ENGYQPRVQS (65 aa)).

Component of the soft endocuticle of desert locust. The polypeptide is Endocuticle structural glycoprotein SgAbd-5 (Schistocerca gregaria (Desert locust)).